The sequence spans 319 residues: TATA-box-binding protein (319 aa).

Disordered regions lie at residues 1–21 (MDQN…QGAM) and 107–139 (LTTA…SESS). Low complexity-rich tracts occupy residues 107-118 (LTTAPLPGTTPL) and 126-136 (MTPITPATPAS). A run of 2 repeats spans residues 145–221 (LQNI…ARVV) and 235–312 (IQNM…YPIL). DNA contacts are provided by asparagine 147, arginine 183, lysine 198, asparagine 237, and arginine 274.

This sequence belongs to the TBP family. In terms of assembly, binds DNA as monomer. Belongs to the TFIID complex together with the TBP-associated factors (TAFs). Part of a TFIID-containing RNA polymerase II pre-initiation complex that is composed of TBP and at least GTF2A1, GTF2A2, GTF2E1, GTF2E2, GTF2F1, GTF2H2, GTF2H3, GTF2H4, GTF2H5, GTF2B, TCEA1, ERCC2, ERCC3, TAF1, TAF2, TAF3, TAF4, TAF5, TAF6, TAF7, TAF8, TAF9, TAF10, TAF11, TAF12 and TAF13. Component of the transcription factor SL1/TIF-IB complex, composed of TBP and at least TAF1A, TAF1B, TAF1C and TAF1D. Association of TBP to form either TFIID or SL1/TIF-IB appears to be mutually exclusive. Interacts with TAF1A, TAF1B and TAF1C. Interacts with TFIIB, NCOA6, DRAP1, DR1 and ELF3. Interacts with SPIB, SNAPC1, SNAPC2 and SNAPC4. Interacts with UTF1. Interacts with BRF2; this interaction promotes recruitment of BRF2 to TATA box-containing promoters. Interacts with UBTF. Interacts with GPBP1. Interacts with CITED2. Interacts with ATF7IP. Interacts with LLPH. Interacts with GTF2B (via C-terminus); this interaction with promoter-bound TBP guides RNA polymerase II into the pre-initiation complex (PIC). Interacts with PAX5. Interacts with MSX1; the interaction may inhibit MSX1 autoinactivation. Interacts with MSX3.

Its subcellular location is the nucleus. In terms of biological role, general transcription factor that functions at the core of the DNA-binding multiprotein factor TFIID. Binding of TFIID to the TATA box is the initial transcriptional step of the pre-initiation complex (PIC), playing a role in the activation of eukaryotic genes transcribed by RNA polymerase II. Component of a BRF2-containing transcription factor complex that regulates transcription mediated by RNA polymerase III. Component of the transcription factor SL1/TIF-IB complex, which is involved in the assembly of the PIC (pre-initiation complex) during RNA polymerase I-dependent transcription. The rate of PIC formation probably is primarily dependent on the rate of association of SL1 with the rDNA promoter. SL1 is involved in stabilization of nucleolar transcription factor 1/UBTF on rDNA. In Bos taurus (Bovine), this protein is TATA-box-binding protein (TBP).